The following is a 298-amino-acid chain: Aspartate carbamoyltransferase catalytic subunit (298 aa).

Carbamoyl phosphate-binding residues include arginine 50 and threonine 51. Lysine 79 serves as a coordination point for L-aspartate. The carbamoyl phosphate site is built by arginine 100, histidine 128, and glutamine 131. L-aspartate-binding residues include arginine 160 and arginine 221. Carbamoyl phosphate contacts are provided by leucine 260 and proline 261.

The protein belongs to the aspartate/ornithine carbamoyltransferase superfamily. ATCase family. As to quaternary structure, heterooligomer of catalytic and regulatory chains.

It carries out the reaction carbamoyl phosphate + L-aspartate = N-carbamoyl-L-aspartate + phosphate + H(+). It functions in the pathway pyrimidine metabolism; UMP biosynthesis via de novo pathway; (S)-dihydroorotate from bicarbonate: step 2/3. In terms of biological role, catalyzes the condensation of carbamoyl phosphate and aspartate to form carbamoyl aspartate and inorganic phosphate, the committed step in the de novo pyrimidine nucleotide biosynthesis pathway. In Methanospirillum hungatei JF-1 (strain ATCC 27890 / DSM 864 / NBRC 100397 / JF-1), this protein is Aspartate carbamoyltransferase catalytic subunit.